We begin with the raw amino-acid sequence, 626 residues long: Chaperone protein HtpG (626 aa).

The tract at residues 1 to 331 (MSETVERHEF…TDDLPLNVSR (331 aa)) is a; substrate-binding. Residues 332–544 (EMLQSTPTLQ…GMGPDLQMQR (213 aa)) are b. A c region spans residues 545–626 (LLRRAGRGFG…GTAAKPAGSA (82 aa)).

This sequence belongs to the heat shock protein 90 family. Homodimer.

It localises to the cytoplasm. Its function is as follows. Molecular chaperone. Has ATPase activity. The protein is Chaperone protein HtpG of Methylorubrum extorquens (strain CM4 / NCIMB 13688) (Methylobacterium extorquens).